We begin with the raw amino-acid sequence, 451 residues long: Bifunctional protein GlmU (451 aa).

The tract at residues 1–217 (MKTLILAAGL…IDEVTGVNDR (217 aa)) is pyrophosphorylase. Residues 6 to 9 (LAAG), Lys20, Gln68, 73 to 74 (GT), 95 to 97 (YGD), Gly134, Glu146, Asn161, and Asn215 each bind UDP-N-acetyl-alpha-D-glucosamine. Residue Asp97 coordinates Mg(2+). Position 215 (Asn215) interacts with Mg(2+). Positions 218–238 (IQLSKLEKNMRKRINEKLMRE) are linker. The N-acetyltransferase stretch occupies residues 239–451 (GVRIIDPESV…GGNQNADSKE (213 aa)). UDP-N-acetyl-alpha-D-glucosamine is bound by residues Arg320 and Lys338. His350 (proton acceptor) is an active-site residue. UDP-N-acetyl-alpha-D-glucosamine is bound by residues Tyr353 and Asn364. Residues Ala367, 373 to 374 (NY), Ser392, Ala410, and Arg427 each bind acetyl-CoA.

It in the N-terminal section; belongs to the N-acetylglucosamine-1-phosphate uridyltransferase family. In the C-terminal section; belongs to the transferase hexapeptide repeat family. As to quaternary structure, homotrimer. The cofactor is Mg(2+).

It localises to the cytoplasm. The enzyme catalyses alpha-D-glucosamine 1-phosphate + acetyl-CoA = N-acetyl-alpha-D-glucosamine 1-phosphate + CoA + H(+). The catalysed reaction is N-acetyl-alpha-D-glucosamine 1-phosphate + UTP + H(+) = UDP-N-acetyl-alpha-D-glucosamine + diphosphate. Its pathway is nucleotide-sugar biosynthesis; UDP-N-acetyl-alpha-D-glucosamine biosynthesis; N-acetyl-alpha-D-glucosamine 1-phosphate from alpha-D-glucosamine 6-phosphate (route II): step 2/2. It participates in nucleotide-sugar biosynthesis; UDP-N-acetyl-alpha-D-glucosamine biosynthesis; UDP-N-acetyl-alpha-D-glucosamine from N-acetyl-alpha-D-glucosamine 1-phosphate: step 1/1. The protein operates within bacterial outer membrane biogenesis; LPS lipid A biosynthesis. In terms of biological role, catalyzes the last two sequential reactions in the de novo biosynthetic pathway for UDP-N-acetylglucosamine (UDP-GlcNAc). The C-terminal domain catalyzes the transfer of acetyl group from acetyl coenzyme A to glucosamine-1-phosphate (GlcN-1-P) to produce N-acetylglucosamine-1-phosphate (GlcNAc-1-P), which is converted into UDP-GlcNAc by the transfer of uridine 5-monophosphate (from uridine 5-triphosphate), a reaction catalyzed by the N-terminal domain. This is Bifunctional protein GlmU from Thermosipho africanus (strain TCF52B).